A 97-amino-acid polypeptide reads, in one-letter code: Co-chaperonin GroES (97 aa).

The protein belongs to the GroES chaperonin family. As to quaternary structure, heptamer of 7 subunits arranged in a ring. Interacts with the chaperonin GroEL.

The protein resides in the cytoplasm. In terms of biological role, together with the chaperonin GroEL, plays an essential role in assisting protein folding. The GroEL-GroES system forms a nano-cage that allows encapsulation of the non-native substrate proteins and provides a physical environment optimized to promote and accelerate protein folding. GroES binds to the apical surface of the GroEL ring, thereby capping the opening of the GroEL channel. The protein is Co-chaperonin GroES of Salmonella agona (strain SL483).